A 260-amino-acid polypeptide reads, in one-letter code: Ribonuclease HII (260 aa).

Positions 73-260 constitute an RNase H type-2 domain; sequence LHIAGIDEAG…APVQQQLDIV (188 aa). A divalent metal cation contacts are provided by Asp79, Glu80, and Asp171.

Belongs to the RNase HII family. The cofactor is Mn(2+). It depends on Mg(2+) as a cofactor.

It is found in the cytoplasm. It carries out the reaction Endonucleolytic cleavage to 5'-phosphomonoester.. Endonuclease that specifically degrades the RNA of RNA-DNA hybrids. This chain is Ribonuclease HII, found in Desulfitobacterium hafniense (strain Y51).